The following is a 64-amino-acid chain: uncharacterized protein (64 aa).

Transmembrane regions (helical) follow at residues 4–24 (IYQY…WLAY) and 35–55 (MYLN…TFGM).

The protein resides in the cell membrane. This is an uncharacterized protein from Bacillus subtilis (strain 168).